A 516-amino-acid polypeptide reads, in one-letter code: Probable serine/threonine-protein kinase DDB_G0293276 (516 aa).

A disordered region spans residues 69–115; sequence SIEIDDENPYNTNNNNNSNNNNNNNNNNCNNSNNSNNNKNINSLDNI. Residues 79 to 115 are compositionally biased toward low complexity; it reads NTNNNNNSNNNNNNNNNNCNNSNNSNNNKNINSLDNI. In terms of domain architecture, Protein kinase spans 232–479; that stretch reads YKHVECIGKG…SKDIKNHPYF (248 aa). ATP contacts are provided by residues 238–246 and K261; that span reads IGKGGYGVV. D350 functions as the Proton acceptor in the catalytic mechanism.

Belongs to the protein kinase superfamily. AGC Ser/Thr protein kinase family.

It catalyses the reaction L-seryl-[protein] + ATP = O-phospho-L-seryl-[protein] + ADP + H(+). The enzyme catalyses L-threonyl-[protein] + ATP = O-phospho-L-threonyl-[protein] + ADP + H(+). This is Probable serine/threonine-protein kinase DDB_G0293276 from Dictyostelium discoideum (Social amoeba).